Here is a 251-residue protein sequence, read N- to C-terminus: NLP effector protein Pc129485 (251 aa).

The N-terminal stretch at 1 to 19 (MNFRIVLLVLVASLAGAQA) is a signal peptide. Residues 127-133 (GHRHNWE) carry the Hepta-peptide GHRHDWE motif motif. Asn-146 and Asn-218 each carry an N-linked (GlcNAc...) asparagine glycan.

The protein belongs to the Necrosis inducing protein (NPP1) family.

It localises to the secreted. Its function is as follows. Secreted effector that contributes strongly to virulence during infection by P.capsici. This is NLP effector protein Pc129485 from Phytophthora capsici.